A 145-amino-acid polypeptide reads, in one-letter code: Putative pre-16S rRNA nuclease (145 aa).

This sequence belongs to the YqgF nuclease family.

Its subcellular location is the cytoplasm. Could be a nuclease involved in processing of the 5'-end of pre-16S rRNA. This chain is Putative pre-16S rRNA nuclease, found in Pseudomonas fluorescens (strain ATCC BAA-477 / NRRL B-23932 / Pf-5).